Consider the following 367-residue polypeptide: Peptide chain release factor 2 (367 aa).

Glutamine 254 bears the N5-methylglutamine mark.

This sequence belongs to the prokaryotic/mitochondrial release factor family. Methylated by PrmC. Methylation increases the termination efficiency of RF2.

It localises to the cytoplasm. Its function is as follows. Peptide chain release factor 2 directs the termination of translation in response to the peptide chain termination codons UGA and UAA. The chain is Peptide chain release factor 2 from Variovorax paradoxus (strain S110).